The chain runs to 541 residues: Putative transferase YhbX (541 aa).

The Periplasmic segment spans residues 1–60 (MTVFNKFARTFKSHWLLYLCVIVFGITNLVASSGAHMVQRLLFFVLTILVVKRISSLPLR). Residues 61–81 (LLVAAPFVLLTAADMSISLYS) traverse the membrane as a helical segment. Topologically, residues 82-110 (WCTFGTTFNDGFAISVLQSDPDEVVKMLG) are cytoplasmic. The helical transmembrane segment at 111–131 (MYIPYLCAFAFLSLLFLAVII) threads the bilayer. Residues 132–141 (KYDVSLPTKK) are Periplasmic-facing. Residues 142 to 162 (VTGILLLIVISGSLFSACQFA) form a helical membrane-spanning segment. Residues 163–264 (YKDAKNKKAF…RKQIKLFNQA (102 aa)) are Cytoplasmic-facing. Residues 265 to 285 (ISGAPYTALSVPLSLTADSVL) form a helical membrane-spanning segment. Topologically, residues 286–541 (SHDIHNYPDN…QGNPTPEGQG (256 aa)) are periplasmic.

This sequence belongs to the phosphoethanolamine transferase family.

The protein localises to the cell inner membrane. In terms of biological role, probably does not transfer phosphoethanolamine to lipid A. The polypeptide is Putative transferase YhbX (yhbX) (Escherichia coli (strain K12)).